The sequence spans 238 residues: 1-(5-phosphoribosyl)-5-[(5-phosphoribosylamino)methylideneamino] imidazole-4-carboxamide isomerase (238 aa).

Asp8 acts as the Proton acceptor in catalysis. The Proton donor role is filled by Asp129.

This sequence belongs to the HisA/HisF family.

It is found in the cytoplasm. The catalysed reaction is 1-(5-phospho-beta-D-ribosyl)-5-[(5-phospho-beta-D-ribosylamino)methylideneamino]imidazole-4-carboxamide = 5-[(5-phospho-1-deoxy-D-ribulos-1-ylimino)methylamino]-1-(5-phospho-beta-D-ribosyl)imidazole-4-carboxamide. It functions in the pathway amino-acid biosynthesis; L-histidine biosynthesis; L-histidine from 5-phospho-alpha-D-ribose 1-diphosphate: step 4/9. The chain is 1-(5-phosphoribosyl)-5-[(5-phosphoribosylamino)methylideneamino] imidazole-4-carboxamide isomerase from Lacticaseibacillus paracasei (strain ATCC 334 / BCRC 17002 / CCUG 31169 / CIP 107868 / KCTC 3260 / NRRL B-441) (Lactobacillus paracasei).